Here is a 92-residue protein sequence, read N- to C-terminus: Small ribosomal subunit protein uS19 (92 aa).

This sequence belongs to the universal ribosomal protein uS19 family.

Protein S19 forms a complex with S13 that binds strongly to the 16S ribosomal RNA. The sequence is that of Small ribosomal subunit protein uS19 from Neisseria gonorrhoeae (strain ATCC 700825 / FA 1090).